The chain runs to 204 residues: MNLVGSYAHHHHHHHHHHHPHPAHPMLHEPFLFGPASRCHQERPYFQSWLLSPADAAPDFPAGGPPPTTAVRAAAASYGPDARPGQSPGRLEALGGRLGRRKGSGPKKERRRTESINSAFAELRECIPNVPADTKLSKIKTLRLATSYIAYLMDVLAKDAQAGDPEAFKAELKKADGGRESKRKRELQQHEGFPPALGPGEKRD.

3 disordered regions span residues 1-24 (MNLV…HPAH), 57-115 (APDF…RTES), and 172-204 (LKKA…EKRD). Basic residues-rich tracts occupy residues 8–22 (AHHH…HPHP) and 98–110 (LGRR…KKER). Residues 100 to 152 (RRKGSGPKKERRRTESINSAFAELRECIPNVPADTKLSKIKTLRLATSYIAYL) form the bHLH domain. T113 is subject to Phosphothreonine; by PLK4. The residue at position 115 (S115) is a Phosphoserine; by PLK4.

Efficient DNA binding requires dimerization with another bHLH protein. Forms homodimers and heterodimers with TCF3 gene products E12 and E47, HAND2 and HEY1, HEY2 and HEYL (hairy-related transcription factors). Interacts with MDFIC. Interacts with SOX15; the interaction enhances HAND1-induced differentiation of trophoblast giant cells. In terms of processing, phosphorylation by PLK4 disrupts the interaction with MDFIC and leads to translocation into the nucleoplasm, allowing dimerization and transcription factor activity.

The protein resides in the nucleus. The protein localises to the nucleoplasm. It is found in the nucleolus. Transcription factor that plays an essential role in both trophoblast giant cell differentiation and in cardiac morphogenesis. Binds the DNA sequence 5'-NRTCTG-3' (non-canonical E-box). Acts as a transcriptional repressor of SOX15. In the adult, could be required for ongoing expression of cardiac-specific genes. In Ovis aries (Sheep), this protein is Heart- and neural crest derivatives-expressed protein 1 (HAND1).